The primary structure comprises 288 residues: Homoserine kinase (288 aa).

An ATP-binding site is contributed by 79–89 (PLARGLGSSSS).

This sequence belongs to the GHMP kinase family. Homoserine kinase subfamily.

It is found in the cytoplasm. The enzyme catalyses L-homoserine + ATP = O-phospho-L-homoserine + ADP + H(+). The protein operates within amino-acid biosynthesis; L-threonine biosynthesis; L-threonine from L-aspartate: step 4/5. Its function is as follows. Catalyzes the ATP-dependent phosphorylation of L-homoserine to L-homoserine phosphate. The chain is Homoserine kinase from Streptococcus sanguinis (strain SK36).